A 427-amino-acid polypeptide reads, in one-letter code: Enolase (427 aa).

Gln163 provides a ligand contact to (2R)-2-phosphoglycerate. Glu205 serves as the catalytic Proton donor. Mg(2+) contacts are provided by Asp242, Glu285, and Asp312. Lys337, Arg366, Ser367, and Lys388 together coordinate (2R)-2-phosphoglycerate. Lys337 functions as the Proton acceptor in the catalytic mechanism.

It belongs to the enolase family. It depends on Mg(2+) as a cofactor.

It localises to the cytoplasm. The protein resides in the secreted. The protein localises to the cell surface. The catalysed reaction is (2R)-2-phosphoglycerate = phosphoenolpyruvate + H2O. It functions in the pathway carbohydrate degradation; glycolysis; pyruvate from D-glyceraldehyde 3-phosphate: step 4/5. Its function is as follows. Catalyzes the reversible conversion of 2-phosphoglycerate (2-PG) into phosphoenolpyruvate (PEP). It is essential for the degradation of carbohydrates via glycolysis. This is Enolase from Rhodopseudomonas palustris (strain HaA2).